The chain runs to 179 residues: Large ribosomal subunit protein uL6 (179 aa).

It belongs to the universal ribosomal protein uL6 family. Part of the 50S ribosomal subunit.

Its function is as follows. This protein binds to the 23S rRNA, and is important in its secondary structure. It is located near the subunit interface in the base of the L7/L12 stalk, and near the tRNA binding site of the peptidyltransferase center. The sequence is that of Large ribosomal subunit protein uL6 from Methylacidiphilum infernorum (isolate V4) (Methylokorus infernorum (strain V4)).